The following is a 358-amino-acid chain: Arginine kinase (358 aa).

The 83-residue stretch at 6–88 (SVEELWAKLD…LDAVIKEYHK (83 aa)) folds into the Phosphagen kinase N-terminal domain. 61 to 65 (GVGIY) serves as a coordination point for substrate. The Phosphagen kinase C-terminal domain maps to 116-353 (YIVSTRVRVG…EACLAKEKEL (238 aa)). ATP-binding positions include 119-123 (STRVR) and His182. Residue Glu222 participates in substrate binding. Residue Arg226 participates in ATP binding. Cys269 provides a ligand contact to substrate. ATP contacts are provided by residues 278–282 (RASVH) and 306–311 (RGIHGE). Glu311 provides a ligand contact to substrate.

The protein belongs to the ATP:guanido phosphotransferase family. As to quaternary structure, monomer.

The catalysed reaction is L-arginine + ATP = N(omega)-phospho-L-arginine + ADP + H(+). This is Arginine kinase from Haliotis madaka (Giant abalone).